The following is a 2271-amino-acid chain: Nucleolar pre-ribosomal-associated protein 1 (2271 aa).

The segment at 1–43 is disordered; that stretch reads MGVPKRKASGGQDGAASSAGAAKRARKEELTGVRFKAQLKDPQ. Phosphoserine occurs at positions 17 and 1143. A disordered region spans residues 2021–2042; the sequence is VMPARAKGPRGRKRRPGEAEEM.

The protein resides in the nucleus. The protein localises to the nucleolus. This is Nucleolar pre-ribosomal-associated protein 1 (URB1) from Homo sapiens (Human).